Reading from the N-terminus, the 225-residue chain is Peptidyl-tRNA hydrolase (225 aa).

A tRNA-binding site is contributed by Y27. H32 (proton acceptor) is an active-site residue. Residues Y78, N80, and N126 each contribute to the tRNA site. The interval 198–225 (FNPLDFSGPDRQDQPAPLNPAKTAPGES) is disordered.

This sequence belongs to the PTH family. Monomer.

It is found in the cytoplasm. It catalyses the reaction an N-acyl-L-alpha-aminoacyl-tRNA + H2O = an N-acyl-L-amino acid + a tRNA + H(+). Its function is as follows. Hydrolyzes ribosome-free peptidyl-tRNAs (with 1 or more amino acids incorporated), which drop off the ribosome during protein synthesis, or as a result of ribosome stalling. Functionally, catalyzes the release of premature peptidyl moieties from peptidyl-tRNA molecules trapped in stalled 50S ribosomal subunits, and thus maintains levels of free tRNAs and 50S ribosomes. The protein is Peptidyl-tRNA hydrolase of Synechococcus sp. (strain JA-3-3Ab) (Cyanobacteria bacterium Yellowstone A-Prime).